The chain runs to 209 residues: V-type ATP synthase subunit D (209 aa).

Belongs to the V-ATPase D subunit family.

Produces ATP from ADP in the presence of a proton gradient across the membrane. The protein is V-type ATP synthase subunit D of Thermoanaerobacter pseudethanolicus (strain ATCC 33223 / 39E) (Clostridium thermohydrosulfuricum).